The primary structure comprises 182 residues: Isopentenyl-diphosphate Delta-isomerase (182 aa).

Mn(2+) is bound by residues His-25 and His-32. Positions 30-164 (LLHLAFSSWL…PWAFSPWMVM (135 aa)) constitute a Nudix hydrolase domain. Cys-67 is a catalytic residue. His-69 serves as a coordination point for Mn(2+). Residue Glu-87 coordinates Mg(2+). The Mn(2+) site is built by Glu-114 and Glu-116. Glu-116 is a catalytic residue.

It belongs to the IPP isomerase type 1 family. In terms of assembly, homodimer. The cofactor is Mg(2+). Mn(2+) is required as a cofactor.

It is found in the cytoplasm. It catalyses the reaction isopentenyl diphosphate = dimethylallyl diphosphate. It functions in the pathway isoprenoid biosynthesis; dimethylallyl diphosphate biosynthesis; dimethylallyl diphosphate from isopentenyl diphosphate: step 1/1. Functionally, catalyzes the 1,3-allylic rearrangement of the homoallylic substrate isopentenyl (IPP) to its highly electrophilic allylic isomer, dimethylallyl diphosphate (DMAPP). This chain is Isopentenyl-diphosphate Delta-isomerase, found in Escherichia coli (strain SMS-3-5 / SECEC).